A 274-amino-acid polypeptide reads, in one-letter code: Diaminopimelate epimerase (274 aa).

Substrate contacts are provided by N11, Q44, and N64. The Proton donor role is filled by C73. Residues 74 to 75, N157, N190, and 208 to 209 contribute to the substrate site; these read GN and ER. C217 (proton acceptor) is an active-site residue. 218–219 contacts substrate; sequence GS.

It belongs to the diaminopimelate epimerase family. Homodimer.

Its subcellular location is the cytoplasm. The catalysed reaction is (2S,6S)-2,6-diaminopimelate = meso-2,6-diaminopimelate. Its pathway is amino-acid biosynthesis; L-lysine biosynthesis via DAP pathway; DL-2,6-diaminopimelate from LL-2,6-diaminopimelate: step 1/1. Catalyzes the stereoinversion of LL-2,6-diaminopimelate (L,L-DAP) to meso-diaminopimelate (meso-DAP), a precursor of L-lysine and an essential component of the bacterial peptidoglycan. This Histophilus somni (strain 129Pt) (Haemophilus somnus) protein is Diaminopimelate epimerase.